A 288-amino-acid chain; its full sequence is 2-hydroxy-6-oxononadienedioate/2-hydroxy-6-oxononatrienedioate hydrolase (288 aa).

Histidine 267 (proton acceptor) is an active-site residue.

This sequence belongs to the AB hydrolase superfamily. MhpC family. Homodimer.

It catalyses the reaction (2Z,4E)-2-hydroxy-6-oxonona-2,4-dienedioate + H2O = (2Z)-2-hydroxypenta-2,4-dienoate + succinate + H(+). It carries out the reaction (2Z,4E,7E)-2-hydroxy-6-oxonona-2,4,7-trienedioate + H2O = (2Z)-2-hydroxypenta-2,4-dienoate + fumarate + H(+). Its pathway is aromatic compound metabolism; 3-phenylpropanoate degradation. Functionally, catalyzes the cleavage of the C5-C6 bond of 2-hydroxy-6-oxononadienedioate and 2-hydroxy-6-oxononatrienedioate, a dienol ring fission product of the bacterial meta-cleavage pathway for degradation of phenylpropionic acid. This is 2-hydroxy-6-oxononadienedioate/2-hydroxy-6-oxononatrienedioate hydrolase from Klebsiella pneumoniae subsp. pneumoniae (strain ATCC 700721 / MGH 78578).